A 503-amino-acid polypeptide reads, in one-letter code: Ribose import ATP-binding protein RbsA (503 aa).

ABC transporter domains follow at residues 10 to 246 (LEVR…VGRD) and 256 to 500 (VEPG…TGSE). 42–49 (GENGAGKS) contacts ATP.

This sequence belongs to the ABC transporter superfamily. Ribose importer (TC 3.A.1.2.1) family. In terms of assembly, the complex is composed of an ATP-binding protein (RbsA), two transmembrane proteins (RbsC) and a solute-binding protein (RbsB).

It localises to the cell membrane. The catalysed reaction is D-ribose(out) + ATP + H2O = D-ribose(in) + ADP + phosphate + H(+). Functionally, part of the ABC transporter complex RbsABC involved in ribose import. Responsible for energy coupling to the transport system. This chain is Ribose import ATP-binding protein RbsA, found in Rhodococcus jostii (strain RHA1).